Reading from the N-terminus, the 428-residue chain is Bifunctional IPC transferase and DIPP synthase (428 aa).

Positions valine 2–alanine 227 are mobA-like NTP transferase. Residues leucine 8–glycine 10, lysine 25, glutamate 80, and glutamate 116 each bind CTP. Residue glutamate 116 coordinates Mg(2+). Residues isoleucine 228–lysine 425 are CDP-alcohol phosphatidyltransferases. Transmembrane regions (helical) follow at residues phenylalanine 266–leucine 286, proline 336–tyrosine 356, and methionine 389–isoleucine 409.

In the N-terminal section; belongs to the MobA family. It in the C-terminal section; belongs to the CDP-alcohol phosphatidyltransferase class-I family. It depends on Mg(2+) as a cofactor.

The protein localises to the membrane. The enzyme catalyses 1D-myo-inositol 3-phosphate + CTP + H(+) = CDP-1L-myo-inositol + diphosphate. It catalyses the reaction CDP-1L-myo-inositol + 1D-myo-inositol 3-phosphate = bis(1L-myo-inositol) 3,1'-phosphate 1-phosphate + CMP + H(+). Involved in biosynthesis of di-myo-inositol phosphate (DIP), a widespread organic solute in microorganisms adapted to hot environments. Catalyzes the condensation of CTP and L-myo-inositol-1-phosphate into CDP-L-myo-inositol, as well as the biosynthesis of di-myo-inositol-1,3'-phosphate-1'-phosphate (DIPP) from CDP-L-myo-inositol and L-myo-inositol-1-phosphate. This chain is Bifunctional IPC transferase and DIPP synthase (spsI), found in Aquifex aeolicus (strain VF5).